The following is a 329-amino-acid chain: Phosphate acyltransferase (329 aa).

Belongs to the PlsX family. As to quaternary structure, homodimer. Probably interacts with PlsY.

Its subcellular location is the cytoplasm. It catalyses the reaction a fatty acyl-[ACP] + phosphate = an acyl phosphate + holo-[ACP]. The protein operates within lipid metabolism; phospholipid metabolism. Catalyzes the reversible formation of acyl-phosphate (acyl-PO(4)) from acyl-[acyl-carrier-protein] (acyl-ACP). This enzyme utilizes acyl-ACP as fatty acyl donor, but not acyl-CoA. This chain is Phosphate acyltransferase, found in Campylobacter fetus subsp. fetus (strain 82-40).